The sequence spans 303 residues: Methionyl-tRNA formyltransferase (303 aa).

(6S)-5,6,7,8-tetrahydrofolate is bound at residue serine 110–proline 113.

The protein belongs to the Fmt family.

It carries out the reaction L-methionyl-tRNA(fMet) + (6R)-10-formyltetrahydrofolate = N-formyl-L-methionyl-tRNA(fMet) + (6S)-5,6,7,8-tetrahydrofolate + H(+). Attaches a formyl group to the free amino group of methionyl-tRNA(fMet). The formyl group appears to play a dual role in the initiator identity of N-formylmethionyl-tRNA by promoting its recognition by IF2 and preventing the misappropriation of this tRNA by the elongation apparatus. The sequence is that of Methionyl-tRNA formyltransferase from Ehrlichia ruminantium (strain Welgevonden).